Consider the following 194-residue polypeptide: Endoribonuclease ToxN (194 aa).

A coiled-coil region spans residues M114–R182. Over residues E171 to R182 the composition is skewed to basic and acidic residues. Residues E171–R194 are disordered.

This sequence belongs to the ToxN/AbiQ toxin family. In terms of assembly, one ToxN monomer binds to a 34-nt-long single repeat of the ToxI RNA; this complex forms a triangular heterohexameric complex with ToxN connected by the ToxI RNA to another toxin molecule. The ToxI repeats are cleavage products of their precursor. The ToxI repeat forms a pseudoknot which occludes the toxin active site.

Its function is as follows. Toxic component of a type III toxin-antitoxin (TA) system. An endoribonuclease which cleaves between the first and second A of AAAAA sequences; it tolerates other nucleotides in positions +2 and +4 of the consensus. Digests cognate antitoxin RNA ToxI as shown by the 2'-3'-cyclic phosphate at the 3' end of the 34-nt repeats and probably other RNAs. Inhibits growth when expressed in E.coli without causing cell lysis; this bacteriostatic effect is neutralized by cognate RNA antitoxin ToxI, which has 2.9 nearly identical 34 nucleotide-long repeats. Non-cognate antitoxin RNA from P.atrosepticum does not inhibit this toxin. The toxin-antitoxin pair function in plasmid maintenance (a plasmid addiction system), but unlike its P.atrosepticum homolog it is not seen to confer resistance to bacteriophages. This chain is Endoribonuclease ToxN, found in Bacillus thuringiensis subsp. kurstaki.